The chain runs to 862 residues: MLSWVLLAWAVACSALAGASRLTPSVLPLVVRNPYLSTWLADARHEPWSSWPIFWTGQHMGMSIMAHVPSTGNTYPLLGRPHDSLGPNNPNNGCFLGSKYDASTTNMTYLIQPEGKHLAGESVKITITFLSPITPTSTLRQSIPAGYVTIRVEGNMNVNIYMDMNGEWVTGDRGSSLIWKMDNIVDTGKGESLYQWQVSRKTEQLFTEFQDRAEWGMLHFLAPQGVRYESGTSMLLRTRFARTGVLQNRNDERFRTVMDEEPVFAYSKAFNLNGTDDEPNIEAIHDEVTFTIAHTQDPVVQFASARGLTLMKPLWESYFPDVKSLLNFHYFDLDKARILAHRYSNQLARDAQLSAAEDYVDVVALTARQVLGATSFSGTSDNPLLFLKEISSNGNCQTVDVIFPSFPFFLYTNPRWLAYLLEPLIEHMLSGQYPNNYSMHDLGAHFPNMTGHPDGKDEYMPVEECGNMLIMGLSIVNSLRFPPEANTTAPWYPGTLEARDAEPDVVGLFPLRDLQTVGGIDRLDSVWGVGPDATNLARKWVEKSYRLWRQWTGYLVEFSLEPHNQLSTDDFAGWLALQTNLALKGIVGINAMSEMSRFVGKTDDYKYFKNISDTYITKWEGFGFSRDGTHAKLSYDWYGSWTTLYNMFADALLCFHLDGTEYDTHPRTLDDQEPIAPPPGKTGFIPRRVYEKQSKWYANVRQKYGLPLDSRHLYTKSDWEFFSMAVSSPSVRSEILQSYAKWVNETSTDHPLTDLYKTEEDGGYPGPNFFARPVVGGHFAFLALEKACNGKATDGLKFLDDKDNNSPEDIPEDNVHDGDADNEDSQSPIQDSDGSEVKAGDQAQFPIQDMDDSQMTIVNEND.

Positions 1 to 19 (MLSWVLLAWAVACSALAGA) are cleaved as a signal peptide. N-linked (GlcNAc...) asparagine glycosylation is found at Asn-106, Asn-273, Asn-436, Asn-448, Asn-486, Asn-610, and Asn-744. The segment at 798–862 (FLDDKDNNSP…SQMTIVNEND (65 aa)) is disordered. Polar residues predominate over residues 853–862 (SQMTIVNEND).

This sequence belongs to the fungal glutaminase gtaA family.

The protein resides in the secreted. It catalyses the reaction L-glutamine + H2O = L-glutamate + NH4(+). In terms of biological role, glutaminase catalyzes the hydrolysis of glutamine to glutamic acid and plays a key role in nitrogen metabolism. The sequence is that of Probable glutaminase ARB_05535/05536 from Arthroderma benhamiae (strain ATCC MYA-4681 / CBS 112371) (Trichophyton mentagrophytes).